We begin with the raw amino-acid sequence, 133 residues long: Histone H2A (133 aa).

Over residues 1–10 (MTGGKSGGKA) the composition is skewed to gly residues. The segment at 1-24 (MTGGKSGGKASGSKNAQSRSSKAG) is disordered. An N6-acetyllysine mark is found at Lys-5 and Lys-9. N5-methylglutamine is present on Gln-106. Ser-130 carries the post-translational modification Phosphoserine. Positions 130–131 (SQ) match the [ST]-Q motif motif.

It belongs to the histone H2A family. As to quaternary structure, the nucleosome is a histone octamer containing two molecules each of H2A, H2B, H3 and H4 assembled in one H3-H4 heterotetramer and two H2A-H2B heterodimers. The octamer wraps approximately 147 bp of DNA. In terms of processing, phosphorylated to form H2AS128ph (gamma-H2A) in response to DNA double-strand breaks (DSBs) generated by exogenous genotoxic agents and by stalled replication forks. Phosphorylation is dependent on the DNA damage checkpoint kinases mec1/ATR and tel1/ATM, spreads on either side of a detected DSB site and may mark the surrounding chromatin for recruitment of proteins required for DNA damage signaling and repair. Gamma-H2A is removed from the DNA prior to the strand invasion-primer extension step of the repair process and subsequently dephosphorylated. Dephosphorylation is necessary for efficient recovery from the DNA damage checkpoint. Post-translationally, acetylated by esa1 to form H2AK4ac and H2AK7ac.

It localises to the nucleus. It is found in the chromosome. Core component of nucleosome which plays a central role in DNA double strand break (DSB) repair. Nucleosomes wrap and compact DNA into chromatin, limiting DNA accessibility to the cellular machineries which require DNA as a template. Histones thereby play a central role in transcription regulation, DNA repair, DNA replication and chromosomal stability. DNA accessibility is regulated via a complex set of post-translational modifications of histones, also called histone code, and nucleosome remodeling. The protein is Histone H2A (hta1) of Aspergillus clavatus (strain ATCC 1007 / CBS 513.65 / DSM 816 / NCTC 3887 / NRRL 1 / QM 1276 / 107).